A 932-amino-acid chain; its full sequence is MGLTPMMRQYLEVKESCKDCILFFRLGDFYEMFFEDAKVASKELELVLTGRDCGLEERAPMCGIPYHAANTYIGRLVSAGYKIAICEQLEDPSASKGIVKRGIIKIITPGTYTDSSFLEENKNNYIMSFYLDDNMCAMSFADISTGEFNSTHSNFKEAVVLDEISKFAPREIVLEENIKESFIHTIKERFPNISISKIKQENFDYNIDNNLKEQFNNFNENEYETIVKKSANGLLYYIFHTQKNILSNINKIDYYSIVDYLTIDVNSRRNLEITENLREKTKKGSLLWALDKTNTAMGGRQLRRWIEQPLINKNPIENRLNAVEELLNNISLQEDLKEDLKSIYDIERIVGKVASKSVNAKELISLKCSIGKVPYIKEYLSNFKSDLFLNMEQCIDTLEDIHKLLDKALLDNPSLSVKEGNIIKEGFNEEVDSLREAKSNGKKWIASLEQKEKEETGIKSLKVSYNKVFGYFIEITKANLNLVPEGRYIRKQTLSNAERYITPELKEMEEKILGAEEKLIDIEYKLFTEIRDFIEENIDRMQKTARIISDIDCLCSLATVALENNYIKPNINAKDEILIEEGRHPVVEKVIPKGEFISNDSLIDTKENQLILITGPNMAGKSTYMRQVALITIMAQIGSFVPAKKANISICDKIFTRIGASDDLAAGKSTFMVEMWEVSNILKNATSKSLVLLDEVGRGTSTYDGLSIAWSVIEYICNNKNLRCKTLFATHYHELTKLEDNIEGVKNYSVSVSELENEIVFLRKIIKGGADQSYGIEVAKLAGLPSPVINRAKEILQHIEGDKEENSLNIAPSKEYKSKDYIEVSKDTSNTKNNLGSEIKHDTLSETNTDTIIEDESTKEHLSSNKKQINCRINDEKSIKKEVAVDSFQINFEYIKRDKIIEEIKNIDILNMTPMEGFNKLYDIINKTKDID.

Gly-615–Ser-622 lines the ATP pocket.

The protein belongs to the DNA mismatch repair MutS family.

In terms of biological role, this protein is involved in the repair of mismatches in DNA. It is possible that it carries out the mismatch recognition step. This protein has a weak ATPase activity. The polypeptide is DNA mismatch repair protein MutS (Clostridium botulinum (strain Hall / ATCC 3502 / NCTC 13319 / Type A)).